We begin with the raw amino-acid sequence, 314 residues long: FHA domain-containing protein DDL (314 aa).

Positions 1-10 (MAPSSRSPSP) are enriched in low complexity. The disordered stretch occupies residues 1-146 (MAPSSRSPSP…NVEEDSVARM (146 aa)). Positions 18 to 127 (ARGEKEIGRS…AIASRHDEGS (110 aa)) are enriched in basic and acidic residues. Ser133 is modified (phosphoserine). Residues 219-282 (YLFGRERRIA…NKTYINESPI (64 aa)) enclose the FHA domain.

Interacts with DCL1 (via N-terminus). In terms of tissue distribution, expressed in roots, lateral roots, vascular strands of roots and leaves, vegetative meristems, pollen and developing seeds.

The protein resides in the nucleus. In terms of biological role, involved in the microRNA (miRNA) and short interfering RNA (siRNA) biogenesis. May facilitate DCL1 to access or recognize primary miRNAs. Binds RNA non-specifically. The protein is FHA domain-containing protein DDL (DDL) of Arabidopsis thaliana (Mouse-ear cress).